Consider the following 197-residue polypeptide: uncharacterized protein (197 aa).

A helical membrane pass occupies residues 11 to 31 (ICGFSLVALTIAGIVGGVYLV).

Its subcellular location is the membrane. This is an uncharacterized protein from Mycoplasma pneumoniae (strain ATCC 29342 / M129 / Subtype 1) (Mycoplasmoides pneumoniae).